Here is a 599-residue protein sequence, read N- to C-terminus: Elongation factor 4 (599 aa).

Residues 2–184 (KNIRNFSIIA…RLVRDIPPPQ (183 aa)) enclose the tr-type G domain. GTP-binding positions include 14 to 19 (DHGKST) and 131 to 134 (NKID).

The protein belongs to the TRAFAC class translation factor GTPase superfamily. Classic translation factor GTPase family. LepA subfamily.

The protein localises to the cell inner membrane. The enzyme catalyses GTP + H2O = GDP + phosphate + H(+). Functionally, required for accurate and efficient protein synthesis under certain stress conditions. May act as a fidelity factor of the translation reaction, by catalyzing a one-codon backward translocation of tRNAs on improperly translocated ribosomes. Back-translocation proceeds from a post-translocation (POST) complex to a pre-translocation (PRE) complex, thus giving elongation factor G a second chance to translocate the tRNAs correctly. Binds to ribosomes in a GTP-dependent manner. The sequence is that of Elongation factor 4 from Salmonella paratyphi A (strain ATCC 9150 / SARB42).